The sequence spans 692 residues: SH3 domain-containing protein 21 (692 aa).

The interval 1-60 (MVQSELQLQPRAGGRAEAASWGDRGNDKGGFGNPDMPSVSPGPQRPPKLSSLAYDSPPDY) is disordered. An SH3 domain is found at 65–126 (SHPEAYRVLF…PDNFVLPPPP (62 aa)). Disordered regions lie at residues 132–501 (PRKV…EVLP), 536–605 (PKGG…SQET), and 672–692 (VMQG…TQTY). Basic and acidic residues predominate over residues 177–186 (PSRDSQKLTS). Residues 210–220 (TQTPQQRSVSS) show a composition bias toward polar residues. 3 stretches are compositionally biased toward basic and acidic residues: residues 378-396 (VSTR…EALQ), 490-501 (NEERLLRGEVLP), and 542-582 (SKEE…KEEV). Residues 628-678 (SLRGEVESLRRALELMGVQLERKLTDIWEELKSEKEQRQRLEVQVMQGTQK) adopt a coiled-coil conformation. Over residues 673-692 (MQGTQKSQTPRIIHAQTQTY) the composition is skewed to polar residues.

In Macaca fascicularis (Crab-eating macaque), this protein is SH3 domain-containing protein 21 (SH3D21).